A 1037-amino-acid polypeptide reads, in one-letter code: Ephrin type-A receptor 5 (1037 aa).

The first 24 residues, 1 to 24 (MRGSGPRGAGRRRPPSGGGDTPIT), serve as a signal peptide directing secretion. The disordered stretch occupies residues 1–24 (MRGSGPRGAGRRRPPSGGGDTPIT). The Extracellular portion of the chain corresponds to 25–573 (PASLAGCYSA…AASSDQSQIP (549 aa)). One can recognise an Eph LBD domain in the interval 60 to 238 (EVNLLDSRTV…YYKKCPSVVR (179 aa)). N264, N299, N369, N423, N436, and N461 each carry an N-linked (GlcNAc...) asparagine glycan. Fibronectin type-III domains follow at residues 357–467 (PPSA…TNQA) and 468–562 (APSP…TTPV). The chain crosses the membrane as a helical span at residues 574-594 (VIAVSVTVGVILLAVVIGVLL). Topologically, residues 595–1037 (SGSCCECGCG…VQLVNGMVPL (443 aa)) are cytoplasmic. Residues Y650 and Y656 each carry the phosphotyrosine; by autocatalysis modification. The Protein kinase domain maps to 675–936 (ITIERVIGAG…EIVNMLDKLI (262 aa)). Residues 681–689 (IGAGEFGEV) and K707 contribute to the ATP site. D800 (proton acceptor) is an active-site residue. Y833 and Y982 each carry phosphotyrosine; by autocatalysis. Residues 965–1029 (GAYRSVGEWL…MNSLQEMKVQ (65 aa)) form the SAM domain. Residues 1035 to 1037 (VPL) carry the PDZ-binding motif.

Belongs to the protein kinase superfamily. Tyr protein kinase family. Ephrin receptor subfamily. As to quaternary structure, heterotetramer upon binding of the ligand. The heterotetramer is composed of an ephrin dimer and a receptor dimer. Oligomerization is probably required to induce biological responses. Interacts (via SAM domain) with SAMD5 (via SAM domain). In terms of processing, phosphorylated. Phosphorylation is stimulated by the ligand EFNA5. Dephosphorylation upon stimulation by glucose, inhibits EPHA5 forward signaling and results in insulin secretion. Almost exclusively expressed in the nervous system in cortical neurons, cerebellar Purkinje cells and pyramidal neurons within the cortex and hippocampus. Display an increasing gradient of expression from the forebrain to hindbrain and spinal cord.

It localises to the cell membrane. The protein resides in the cell projection. The protein localises to the axon. It is found in the dendrite. The catalysed reaction is L-tyrosyl-[protein] + ATP = O-phospho-L-tyrosyl-[protein] + ADP + H(+). In terms of biological role, receptor tyrosine kinase which binds promiscuously GPI-anchored ephrin-A family ligands residing on adjacent cells, leading to contact-dependent bidirectional signaling into neighboring cells. The signaling pathway downstream of the receptor is referred to as forward signaling while the signaling pathway downstream of the ephrin ligand is referred to as reverse signaling. Among GPI-anchored ephrin-A ligands, EFNA5 most probably constitutes the cognate/functional ligand for EPHA5. Functions as an axon guidance molecule during development and may be involved in the development of the retinotectal, entorhino-hippocampal and hippocamposeptal pathways. Together with EFNA5 plays also a role in synaptic plasticity in adult brain through regulation of synaptogenesis. In addition to its function in the nervous system, the interaction of EPHA5 with EFNA5 mediates communication between pancreatic islet cells to regulate glucose-stimulated insulin secretion. The sequence is that of Ephrin type-A receptor 5 (EPHA5) from Homo sapiens (Human).